The following is a 111-amino-acid chain: Ig kappa chain V-III region PC 2485/PC 4039 (111 aa).

Residues 1–23 (DIVLTQSPASLAVSLGQRATISC) are framework-1. A disulfide bridge links Cys23 with Cys92. The interval 24–38 (RASKSVSTSGYSYMH) is complementarity-determining-1. Residues 39-53 (WYQQKPGQPPKLLIY) form a framework-2 region. The tract at residues 54 to 60 (LASSLES) is complementarity-determining-2. The tract at residues 61 to 92 (GVPARFSGSGSGTDFTLNIQPVEEEDAAIYYC) is framework-3. Residues 93 to 101 (QHSRELPLT) form a complementarity-determining-3 region. Residues 102 to 111 (FGAGTKLELK) are framework-4.

The chain is Ig kappa chain V-III region PC 2485/PC 4039 from Mus musculus (Mouse).